The primary structure comprises 345 residues: MNINEILKKLINKSDLEINEAEELAKAIIRGEVPEILVSAILVALRMKGESKNEIVGFARAMRELAIKIDVPNAIDTAGTGGDGLGTVNVSTASAILLSLVNPVAKHGNRAVSGKSGSADVLEALGYNIIVPPERAKELVNKTNFVFLFAQYYHPAMKNVANVRKTLGIRTIFNILGPLTNPANAKYQLMGVFSKDHLDLLSKSAYELDFNKIILVYGEPGIDEVSPIGNTFMKIVSKRGIEEVKLNVTDFGISPIPIEKLIVNSAEDSAIKIVRAFLGKDEHVAEFIKINTAVALFALDRVGDFREGYEYADHLIEKSLDKLNEIISMNGDVTKLKTIVVKSSG.

5-phospho-alpha-D-ribose 1-diphosphate is bound by residues Thr-77–Gly-79, Gly-82–Asp-83, Thr-87, Asn-89–Thr-92, Lys-106–Gly-114, and Ser-118. Gly-79 lines the anthranilate pocket. A Mg(2+)-binding site is contributed by Ser-91. Asn-109 contributes to the anthranilate binding site. Arg-164 contributes to the anthranilate binding site. Mg(2+) contacts are provided by Asp-223 and Glu-224.

It belongs to the anthranilate phosphoribosyltransferase family. As to quaternary structure, homodimer. It depends on Mg(2+) as a cofactor.

The enzyme catalyses N-(5-phospho-beta-D-ribosyl)anthranilate + diphosphate = 5-phospho-alpha-D-ribose 1-diphosphate + anthranilate. Its pathway is amino-acid biosynthesis; L-tryptophan biosynthesis; L-tryptophan from chorismate: step 2/5. In terms of biological role, catalyzes the transfer of the phosphoribosyl group of 5-phosphorylribose-1-pyrophosphate (PRPP) to anthranilate to yield N-(5'-phosphoribosyl)-anthranilate (PRA). The chain is Anthranilate phosphoribosyltransferase from Saccharolobus solfataricus (strain ATCC 35092 / DSM 1617 / JCM 11322 / P2) (Sulfolobus solfataricus).